Here is a 784-residue protein sequence, read N- to C-terminus: Alpha-catulin (784 aa).

The tract at residues Ile-35–Leu-247 is vinculin/alpha-catenin homology 1 (VH1) region. A coiled-coil region spans residues Ala-387 to Glu-414. Residues Pro-552–Thr-696 form a vinculin/alpha-catenin homology 2 (VH2) region region. The tract at residues Gly-737–Ile-784 is disordered. The segment covering Ala-745–Val-756 has biased composition (basic and acidic residues). Residues Ser-771 to Ile-784 are compositionally biased toward low complexity.

This sequence belongs to the vinculin/alpha-catenin family. Interacts with slo-1 (via C-terminus); the interaction is required for localization of slo-1 to dense bodies in body wall muscle cells. Interacts (via N-terminus) with dystrophin complex member dyb-1 (via C-terminus); the interaction is required for localization of the dystrophin complex and ctn-1 near dense bodies in muscle cells. Expressed in body wall muscles, vulval muscles, stomatointestinal cells and pharyngeal muscle cells. Expressed in enteric muscles, nerve ring neurons and in the ventral nerve cord.

It localises to the cytoplasm. In terms of biological role, required for slo-1 potassium ion channel clustering at presynaptic terminals and in egg-laying muscles; clustering of slo-1 mediates the intoxicating and sedatory effects of ethanol on worms. Required for slo-1 localization to dense bodies in body wall muscle cells. Maintains the localization of the dystrophin complex near muscle cell dense bodies via its interaction with complex member dyb-1 which is required for slo-1 localization in muscle while slo-1 localization in neurons is independent of the dystrophin complex. In Caenorhabditis elegans, this protein is Alpha-catulin.